Consider the following 156-residue polypeptide: Transcription antitermination protein NusB (156 aa).

It belongs to the NusB family.

Functionally, involved in transcription antitermination. Required for transcription of ribosomal RNA (rRNA) genes. Binds specifically to the boxA antiterminator sequence of the ribosomal RNA (rrn) operons. In Rickettsia akari (strain Hartford), this protein is Transcription antitermination protein NusB.